The sequence spans 213 residues: Orotate phosphoribosyltransferase (213 aa).

5-phospho-alpha-D-ribose 1-diphosphate is bound at residue Lys-26. Orotate is bound at residue Phe-34–Phe-35. 5-phospho-alpha-D-ribose 1-diphosphate contacts are provided by residues Tyr-72–Lys-73, Arg-99, Lys-100, Lys-103, His-105, and Asp-124–Ala-132. Positions 128 and 156 each coordinate orotate.

The protein belongs to the purine/pyrimidine phosphoribosyltransferase family. PyrE subfamily. In terms of assembly, homodimer. The cofactor is Mg(2+).

The catalysed reaction is orotidine 5'-phosphate + diphosphate = orotate + 5-phospho-alpha-D-ribose 1-diphosphate. Its pathway is pyrimidine metabolism; UMP biosynthesis via de novo pathway; UMP from orotate: step 1/2. In terms of biological role, catalyzes the transfer of a ribosyl phosphate group from 5-phosphoribose 1-diphosphate to orotate, leading to the formation of orotidine monophosphate (OMP). The protein is Orotate phosphoribosyltransferase of Shigella flexneri serotype 5b (strain 8401).